Reading from the N-terminus, the 309-residue chain is Aromatic prenyltransferase (309 aa).

This sequence belongs to the aromatic prenyltransferase family.

Its function is as follows. Prenyltransferase that attaches isoprenoid moieties to carbon atoms of aromatic substrates in an enzyme-catalyzed Friedel-Crafts reaction. Shows specificity for dimethylallyl diphosphate (DMAPP) and does not accept geranyl diphosphate (GPP) or isopentenyl diphosphate (IPP). Prenylates the artificial substrate 2,7-dihydroxynaphthalene (2,7-DHN), as well as dihydrophenazine-1-carboxylic acid and 4-hydroxybenzoic acid at lower levels. Only traces of products are detected with aspulvinone E or flaviolin as substrates; and no product is formed with L-tryptophan, L-tyrosine, or 4-hydroxyphenylpyruvate. Ptf seems no to be involved in the prenylation reaction in the biosynthesis of aspulvinone H and J and the physiological function of ptf remains unknown. The protein is Aromatic prenyltransferase of Botryotinia fuckeliana (strain B05.10) (Noble rot fungus).